The sequence spans 44 residues: Alpha-amylase inhibitor WDAI-3 (44 aa).

Cys-20 and Cys-41 are oxidised to a cystine.

The protein belongs to the protease inhibitor I6 (cereal trypsin/alpha-amylase inhibitor) family. Homodimer. In terms of processing, the disulfide bonds are essential for the inhibitor activity. As to expression, endosperm.

It localises to the secreted. Functionally, alpha-amylase inhibitor. This chain is Alpha-amylase inhibitor WDAI-3 (IHA-B1-2), found in Triticum aestivum (Wheat).